Reading from the N-terminus, the 662-residue chain is Protein Aster-C (662 aa).

A disordered region spans residues 1–34; sequence MEGAPTVRQVMNEGDSSLATDLQEDVEENPSPTV. Residues 69 to 136 form the GRAM domain; the sequence is EEYRRQFTHL…KNITFMTKEK (68 aa). 2 disordered regions span residues 212–237 and 249–284; these read SIEDVQPRSPGRSSLDDSGERDEKLS and RVSETESFDGNSSKGGLGKEESQNEKQTKKSLLPTL. A compositionally biased stretch (basic and acidic residues) spans 265–276; it reads LGKEESQNEKQT. The region spanning 326 to 497 is the VASt domain; that stretch reads HGRLFINRIF…DLLIEESVLN (172 aa). Residues 557–577 form a helical membrane-spanning segment; that stretch reads LIVVMSIFVLLLVLLNVTLFL.

It is found in the endoplasmic reticulum membrane. The protein resides in the cell membrane. Functionally, cholesterol transporter that mediates non-vesicular transport of cholesterol from the plasma membrane (PM) to the endoplasmic reticulum (ER). Contains unique domains for binding cholesterol and the PM, thereby serving as a molecular bridge for the transfer of cholesterol from the PM to the ER. Plays a crucial role in cholesterol homeostasis and has the unique ability to localize to the PM based on the level of membrane cholesterol. In lipid-poor conditions localizes to the ER membrane and in response to excess cholesterol in the PM is recruited to the endoplasmic reticulum-plasma membrane contact sites (EPCS) which is mediated by the GRAM domain. At the EPCS, the sterol-binding VASt/ASTER domain binds to the cholesterol in the PM and facilitates its transfer from the PM to ER. The protein is Protein Aster-C (GRAMD1C) of Homo sapiens (Human).